A 309-amino-acid chain; its full sequence is Malate dehydrogenase (309 aa).

Residues 9–14 (GAGFVG) and aspartate 33 contribute to the NAD(+) site. Substrate-binding residues include arginine 82 and arginine 88. NAD(+)-binding positions include asparagine 95 and 118–120 (VNN). Residues asparagine 120 and arginine 151 each contribute to the substrate site. Residue histidine 175 is the Proton acceptor of the active site.

The protein belongs to the LDH/MDH superfamily. MDH type 3 family.

It carries out the reaction (S)-malate + NAD(+) = oxaloacetate + NADH + H(+). In terms of biological role, catalyzes the reversible oxidation of malate to oxaloacetate. The sequence is that of Malate dehydrogenase from Chloroflexus aggregans (strain MD-66 / DSM 9485).